A 257-amino-acid chain; its full sequence is Sad1-interacting factor 1 (257 aa).

The disordered stretch occupies residues 16 to 68 (LNKIKQGGASRINQILGQNSDDSQSDVRATASEEAVHSETATPVTPMSSGFME). Polar residues-rich tracts occupy residues 26-37 (RINQILGQNSDD) and 54-63 (ETATPVTPMS). A Phosphoserine modification is found at Ser35. Ser132 is modified (phosphoserine). Position 134 is a phosphothreonine (Thr134). 2 helical membrane-spanning segments follow: residues 160–180 (LLAI…LLPW) and 231–251 (FTQL…CCYF).

Interacts with kms1 and sad1.

It is found in the membrane. This chain is Sad1-interacting factor 1 (sif1), found in Schizosaccharomyces pombe (strain 972 / ATCC 24843) (Fission yeast).